The chain runs to 60 residues: Large ribosomal subunit protein bL32 (60 aa).

The segment covering 1 to 16 (MPNPKRRHSKKRTSTR) has biased composition (basic residues). Residues 1-28 (MPNPKRRHSKKRTSTRRAHDALKQPGLS) form a disordered region.

The protein belongs to the bacterial ribosomal protein bL32 family.

This Solibacter usitatus (strain Ellin6076) protein is Large ribosomal subunit protein bL32.